The following is a 300-amino-acid chain: GTPase Era (300 aa).

The Era-type G domain maps to 4-172 (KSGFVALAGK…LEKIKEELPE (169 aa)). The G1 stretch occupies residues 12–19 (GKPNVGKS). Position 12 to 19 (12 to 19 (GKPNVGKS)) interacts with GTP. A G2 region spans residues 38 to 42 (QTTRN). The interval 59-62 (DTPG) is G3. Residues 59–63 (DTPGI) and 121–124 (NKID) each bind GTP. A G4 region spans residues 121–124 (NKID). The tract at residues 151-153 (ISA) is G5. The region spanning 195-280 (IREKIFHLTR…YLDLNVKVKE (86 aa)) is the KH type-2 domain.

The protein belongs to the TRAFAC class TrmE-Era-EngA-EngB-Septin-like GTPase superfamily. Era GTPase family. As to quaternary structure, monomer.

The protein resides in the cytoplasm. It is found in the cell inner membrane. Functionally, an essential GTPase that binds both GDP and GTP, with rapid nucleotide exchange. Plays a role in 16S rRNA processing and 30S ribosomal subunit biogenesis and possibly also in cell cycle regulation and energy metabolism. The sequence is that of GTPase Era from Thermotoga petrophila (strain ATCC BAA-488 / DSM 13995 / JCM 10881 / RKU-1).